Reading from the N-terminus, the 843-residue chain is Protein P (843 aa).

The interval 1-177 (MPLSYQHFRR…FCGSPYSWEQ (177 aa)) is terminal protein domain (TP). Residues 178–346 (ELQHGSTSLN…YCLSHIINLL (169 aa)) are spacer. Residues 249 to 301 (TPTRWPSGVEPSGTGHSDNLATRSTSRFHQSEVRKETNPSLSTSKGHTSTGHA) form a disordered region. Polar residues-rich tracts occupy residues 262 to 276 (TGHSDNLATRSTSRF) and 286 to 299 (NPSLSTSKGHTSTG). The segment at 347–690 (EDWGPCYEHG…YMNLYPVARQ (344 aa)) is polymerase/reverse transcriptase domain (RT). Residues 357 to 600 (EHHIRTPRTP…YSLHFMGYII (244 aa)) enclose the Reverse transcriptase domain. Residues D429, D551, and D552 each contribute to the Mg(2+) site.

The protein belongs to the hepadnaviridae P protein family.

It catalyses the reaction DNA(n) + a 2'-deoxyribonucleoside 5'-triphosphate = DNA(n+1) + diphosphate. It carries out the reaction Endonucleolytic cleavage to 5'-phosphomonoester.. With respect to regulation, activated by host HSP70 and HSP40 in vitro to be able to bind the epsilon loop of the pgRNA. Because deletion of the RNase H region renders the protein partly chaperone-independent, the chaperones may be needed indirectly to relieve occlusion of the RNA-binding site by this domain. Inhibited by several reverse-transcriptase inhibitors: Lamivudine, Adefovir and Entecavir. Its function is as follows. Multifunctional enzyme that converts the viral RNA genome into dsDNA in viral cytoplasmic capsids. This enzyme displays a DNA polymerase activity that can copy either DNA or RNA templates, and a ribonuclease H (RNase H) activity that cleaves the RNA strand of RNA-DNA heteroduplexes in a partially processive 3'- to 5'-endonucleasic mode. Neo-synthesized pregenomic RNA (pgRNA) are encapsidated together with the P protein, and reverse-transcribed inside the nucleocapsid. Initiation of reverse-transcription occurs first by binding the epsilon loop on the pgRNA genome, and is initiated by protein priming, thereby the 5'-end of (-)DNA is covalently linked to P protein. Partial (+)DNA is synthesized from the (-)DNA template and generates the relaxed circular DNA (RC-DNA) genome. After budding and infection, the RC-DNA migrates in the nucleus, and is converted into a plasmid-like covalently closed circular DNA (cccDNA). The activity of P protein does not seem to be necessary for cccDNA generation, and is presumably released from (+)DNA by host nuclear DNA repair machinery. The polypeptide is Protein P (Homo sapiens (Human)).